Here is a 421-residue protein sequence, read N- to C-terminus: 4-hydroxy-3-methylbut-2-en-1-yl diphosphate synthase (flavodoxin) (421 aa).

4 residues coordinate [4Fe-4S] cluster: C298, C301, C344, and E351.

Belongs to the IspG family. [4Fe-4S] cluster serves as cofactor.

The enzyme catalyses (2E)-4-hydroxy-3-methylbut-2-enyl diphosphate + oxidized [flavodoxin] + H2O + 2 H(+) = 2-C-methyl-D-erythritol 2,4-cyclic diphosphate + reduced [flavodoxin]. Its pathway is isoprenoid biosynthesis; isopentenyl diphosphate biosynthesis via DXP pathway; isopentenyl diphosphate from 1-deoxy-D-xylulose 5-phosphate: step 5/6. Converts 2C-methyl-D-erythritol 2,4-cyclodiphosphate (ME-2,4cPP) into 1-hydroxy-2-methyl-2-(E)-butenyl 4-diphosphate. The polypeptide is 4-hydroxy-3-methylbut-2-en-1-yl diphosphate synthase (flavodoxin) (Neisseria meningitidis serogroup C (strain 053442)).